We begin with the raw amino-acid sequence, 493 residues long: Probable cytosol aminopeptidase (493 aa).

Positions 256 and 261 each coordinate Mn(2+). The active site involves Lys268. Mn(2+) is bound by residues Asp279, Asp338, and Glu340. Residue Arg342 is part of the active site.

The protein belongs to the peptidase M17 family. It depends on Mn(2+) as a cofactor.

It localises to the cytoplasm. It catalyses the reaction Release of an N-terminal amino acid, Xaa-|-Yaa-, in which Xaa is preferably Leu, but may be other amino acids including Pro although not Arg or Lys, and Yaa may be Pro. Amino acid amides and methyl esters are also readily hydrolyzed, but rates on arylamides are exceedingly low.. The enzyme catalyses Release of an N-terminal amino acid, preferentially leucine, but not glutamic or aspartic acids.. In terms of biological role, presumably involved in the processing and regular turnover of intracellular proteins. Catalyzes the removal of unsubstituted N-terminal amino acids from various peptides. In Phytoplasma australiense, this protein is Probable cytosol aminopeptidase.